We begin with the raw amino-acid sequence, 611 residues long: MTIKLLSESTINRIAAGEVIERPASVVKELVENAVDAGSTKIDIILERAGKNLIIISDDGVGMTDKELEIAVERHTTSKLDETDFLNIHTFGFRGEALPSIAAISKMLITSKKRDNQKAFQIKLIGGDEKQIAPAIHNEGTKIEIRDLFFATPARLKFLRTDKTELAATVDVVKKIALAHPEISFSLTHDGKTLLKLKGQNKDAENNLKQRIIDVIGEDFIKNASYIDFKSPDFSIYGYTSIPTYNRASSEDQFLFINNRPVKDKLLQVALRVAYQDYMLRDRYPLCAIFLQIDPQLVDVNVHPAKAEVRFHDPNYVRNLLIDSIKNALSNKSHIASTTIASSAIELFKNPFVNKEPAISKPLNVNSKPSKYRPATSPTVPKYTPNNSCQKLIDTLPHARIEQEVEQRIQNEPQKSSQYRLGAAKAQLHTTYVISQTEDSIVITDQHAAHERLGYEKIKNYIKNEELIKQRLLIPEIVELPDEKRADILYENKDKLSKLGLSLEKFGEKSIIVTEIPNILGDINVQKLIQDLADHLAECGENIALTELIEHVTETYACHYSIRAGRKLSADEMNALLRQMENTPFSGQCNHGRPTYIELKLKDIERLFGRK.

Residues 364–384 (NVNSKPSKYRPATSPTVPKYT) are disordered.

Belongs to the DNA mismatch repair MutL/HexB family.

Its function is as follows. This protein is involved in the repair of mismatches in DNA. It is required for dam-dependent methyl-directed DNA mismatch repair. May act as a 'molecular matchmaker', a protein that promotes the formation of a stable complex between two or more DNA-binding proteins in an ATP-dependent manner without itself being part of a final effector complex. This Rickettsia bellii (strain OSU 85-389) protein is DNA mismatch repair protein MutL.